A 151-amino-acid chain; its full sequence is UPF0719 transmembrane protein MAP_1032c (151 aa).

The next 4 membrane-spanning stretches (helical) occupy residues 20–40, 60–80, 90–110, and 130–150; these read VATI…FYAV, AVVV…TAIA, LVGV…ALLA, and PGSF…AAAV.

It belongs to the UPF0719 family.

The protein resides in the cell membrane. The polypeptide is UPF0719 transmembrane protein MAP_1032c (Mycolicibacterium paratuberculosis (strain ATCC BAA-968 / K-10) (Mycobacterium paratuberculosis)).